We begin with the raw amino-acid sequence, 166 residues long: Ribosome maturation factor RimP (166 aa).

It belongs to the RimP family.

Its subcellular location is the cytoplasm. Functionally, required for maturation of 30S ribosomal subunits. This Psychrobacter sp. (strain PRwf-1) protein is Ribosome maturation factor RimP.